Here is a 121-residue protein sequence, read N- to C-terminus: Large ribosomal subunit protein bL21c (121 aa).

The protein belongs to the bacterial ribosomal protein bL21 family. As to quaternary structure, part of the 50S ribosomal subunit.

The protein localises to the plastid. Its subcellular location is the chloroplast. Functionally, this protein binds to 23S rRNA. The chain is Large ribosomal subunit protein bL21c from Huperzia lucidula (Shining clubmoss).